A 351-amino-acid chain; its full sequence is Methionine import ATP-binding protein MetN (351 aa).

The region spanning 2–247 (ITTSGLTKVY…PGSELAAALF (246 aa)) is the ABC transporter domain. 38-45 (GQSGAGKS) serves as a coordination point for ATP.

The protein belongs to the ABC transporter superfamily. Methionine importer (TC 3.A.1.24) family. In terms of assembly, the complex is composed of two ATP-binding proteins (MetN), two transmembrane proteins (MetI) and a solute-binding protein (MetQ).

Its subcellular location is the cell membrane. It catalyses the reaction L-methionine(out) + ATP + H2O = L-methionine(in) + ADP + phosphate + H(+). It carries out the reaction D-methionine(out) + ATP + H2O = D-methionine(in) + ADP + phosphate + H(+). Part of the ABC transporter complex MetNIQ involved in methionine import. Responsible for energy coupling to the transport system. This chain is Methionine import ATP-binding protein MetN, found in Streptomyces coelicolor (strain ATCC BAA-471 / A3(2) / M145).